Consider the following 248-residue polypeptide: Leucyl/phenylalanyl-tRNA--protein transferase (248 aa).

Belongs to the L/F-transferase family.

The protein localises to the cytoplasm. It catalyses the reaction N-terminal L-lysyl-[protein] + L-leucyl-tRNA(Leu) = N-terminal L-leucyl-L-lysyl-[protein] + tRNA(Leu) + H(+). The enzyme catalyses N-terminal L-arginyl-[protein] + L-leucyl-tRNA(Leu) = N-terminal L-leucyl-L-arginyl-[protein] + tRNA(Leu) + H(+). The catalysed reaction is L-phenylalanyl-tRNA(Phe) + an N-terminal L-alpha-aminoacyl-[protein] = an N-terminal L-phenylalanyl-L-alpha-aminoacyl-[protein] + tRNA(Phe). Functionally, functions in the N-end rule pathway of protein degradation where it conjugates Leu, Phe and, less efficiently, Met from aminoacyl-tRNAs to the N-termini of proteins containing an N-terminal arginine or lysine. The polypeptide is Leucyl/phenylalanyl-tRNA--protein transferase (Oleidesulfovibrio alaskensis (strain ATCC BAA-1058 / DSM 17464 / G20) (Desulfovibrio alaskensis)).